The sequence spans 379 residues: RING finger protein 215 (379 aa).

2 disordered regions span residues 1-21 (MGSA…PPSP) and 44-63 (AADG…RSVR). Topologically, residues 1–24 (MGSADRPALRSPSLPPPPPSPPSP) are cytoplasmic. A helical transmembrane segment spans residues 25-45 (LLLLLPLLPLWLGLMGPGAAA). At 46–252 (DGSEPATGEG…GGAQAQEQKP (207 aa)) the chain is on the extracellular side. N-linked (GlcNAc...) asparagine glycosylation occurs at asparagine 188. The helical transmembrane segment at 253 to 273 (LQQLWNAILLVAMLLCTGLVV) threads the bilayer. The Cytoplasmic portion of the chain corresponds to 274–379 (QAQRQASRQN…NVLGNHYSDD (106 aa)). The RING-type; atypical zinc finger occupies 327-368 (CAVCLDYFCNKQWLRVLPCKHEFHRDCVDPWLMLQQTCPLCK).

Its subcellular location is the membrane. The polypeptide is RING finger protein 215 (Rnf215) (Mus musculus (Mouse)).